A 539-amino-acid polypeptide reads, in one-letter code: uncharacterized protein (539 aa).

6-20 provides a ligand contact to FAD; the sequence is LIIGGGGAAARAAIE. Residues His227 and Arg243 contribute to the active site.

The protein belongs to the FAD-dependent oxidoreductase 2 family. FRD/SDH subfamily. The cofactor is FAD.

This is an uncharacterized protein from Methanocaldococcus jannaschii (strain ATCC 43067 / DSM 2661 / JAL-1 / JCM 10045 / NBRC 100440) (Methanococcus jannaschii).